The chain runs to 396 residues: Squamosa promoter-binding-like protein 10 (396 aa).

The disordered stretch occupies residues 74-104 (QSTSINSSSPEDKRCNLASQSSPGDSSSNID). A compositionally biased stretch (polar residues) spans 90–104 (LASQSSPGDSSSNID). The segment at 173-250 (VPRCQIDGCE…SHHNARRRKP (78 aa)) adopts an SBP-type zinc-finger fold. Cysteine 176, cysteine 181, cysteine 198, histidine 201, cysteine 217, cysteine 220, histidine 224, and cysteine 236 together coordinate Zn(2+). Residues 233-249 (KRSCRKRLSHHNARRRK) carry the Bipartite nuclear localization signal motif.

Zn(2+) serves as cofactor.

It is found in the nucleus. Trans-acting factor that binds specifically to the consensus nucleotide sequence 5'-TNCGTACAA-3'. In Arabidopsis thaliana (Mouse-ear cress), this protein is Squamosa promoter-binding-like protein 10 (SPL10).